Here is a 104-residue protein sequence, read N- to C-terminus: DNA-directed RNA polymerase subunit omega (104 aa).

A disordered region spans residues 76-104 (IEEEKRRKEEEEKKIKEQIAKEKEDGEKI).

It belongs to the RNA polymerase subunit omega family. As to quaternary structure, the RNAP catalytic core consists of 2 alpha, 1 beta, 1 beta' and 1 omega subunit. When a sigma factor is associated with the core the holoenzyme is formed, which can initiate transcription.

The catalysed reaction is RNA(n) + a ribonucleoside 5'-triphosphate = RNA(n+1) + diphosphate. Functionally, promotes RNA polymerase assembly. Latches the N- and C-terminal regions of the beta' subunit thereby facilitating its interaction with the beta and alpha subunits. This chain is DNA-directed RNA polymerase subunit omega, found in Streptococcus pneumoniae (strain CGSP14).